The primary structure comprises 169 residues: Holo-[acyl-carrier-protein] synthase (169 aa).

Mg(2+) contacts are provided by D8 and E50.

It belongs to the P-Pant transferase superfamily. AcpS family. Requires Mg(2+) as cofactor.

The protein localises to the cytoplasm. The catalysed reaction is apo-[ACP] + CoA = holo-[ACP] + adenosine 3',5'-bisphosphate + H(+). Transfers the 4'-phosphopantetheine moiety from coenzyme A to a Ser of acyl-carrier-protein. This chain is Holo-[acyl-carrier-protein] synthase, found in Thermotoga maritima (strain ATCC 43589 / DSM 3109 / JCM 10099 / NBRC 100826 / MSB8).